A 485-amino-acid chain; its full sequence is NADH-quinone oxidoreductase subunit N (485 aa).

14 consecutive transmembrane segments (helical) span residues Leu8–Ile28, Phe35–Val55, Phe75–Leu95, Phe105–Leu125, Ser127–Phe147, Tyr159–Ala179, Leu203–Phe223, Pro235–Met255, Ile271–Gln291, Leu297–Gln317, Val326–Leu346, Ala374–Gly394, Leu407–Leu426, and Ala449–Leu469.

It belongs to the complex I subunit 2 family. In terms of assembly, NDH-1 is composed of 13 different subunits. Subunits NuoA, H, J, K, L, M, N constitute the membrane sector of the complex.

It is found in the cell inner membrane. It catalyses the reaction a quinone + NADH + 5 H(+)(in) = a quinol + NAD(+) + 4 H(+)(out). Its function is as follows. NDH-1 shuttles electrons from NADH, via FMN and iron-sulfur (Fe-S) centers, to quinones in the respiratory chain. The immediate electron acceptor for the enzyme in this species is believed to be ubiquinone. Couples the redox reaction to proton translocation (for every two electrons transferred, four hydrogen ions are translocated across the cytoplasmic membrane), and thus conserves the redox energy in a proton gradient. The polypeptide is NADH-quinone oxidoreductase subunit N (Pectobacterium atrosepticum (strain SCRI 1043 / ATCC BAA-672) (Erwinia carotovora subsp. atroseptica)).